A 1319-amino-acid polypeptide reads, in one-letter code: MMSRTVRLVLLALACTVDLSQASGFTENGLSLLSYQLCSYPVTRSVQKLQAVQTSHTAYVYCGGWIPWKKCPKTVYRTQYLAMDVPESRNVTDCCAGFEQLGLYCVLSLNRSREFASRPGVCPTAEAEPLSPSCSLDTDCSGLQKCCSWPGGRHCVSPTPTGTEKSMVSWYNVTVLVKVGFEDLQREDPGLRNHTRLLYSLVTSALQPLNPAVHYLTSTGGKDTFTTVSWLLMGFPRLMTVANVSVMLDDMVNRVYEVVSIQVQDVNECLHSELQACSVREQCRNLEGSYQCVSSQRLNHTDEDCPPIRDFVALNVTSSSFHVSWSLNSTQNYNFHIQVYKGKEILRSAWTRGHTMAVSDLEAGVLYRVRTSYLGCGANVSATLVVKTDAQVFQVTIRIMDRNLTEQILDCSSGEFWNFSRQLFHEVQNSFPQAISDLYRQGRLRMQIVSLQAGSLVVTLRLTLQDPDFSVGVHTLTPMLPVLSVSNVFQVDQQRTFVQDWDECAHSSEHDCHPSARCINLEGSYTCQCLTARDASPSRAGRVCEGDMVIPTGDELSVTTKVTVPAASTGITTFGPETLTESLSSKHPRSTPARSQTWTPVPPSVRDGGSIVRQDRNSTGQGQTHGTHQGTTDAPLHTTRESQELITKDPPFLTATTTGYVVWHSSPTWKTPPNSTRLQNEDPRSSSFPGPPSAPTDVTPESPACVPGPIGKVTVSNVTSTSFSLEWPADIRLSPAFHLTLVSPRGPAMTMETQNNNVTLSGLEWGTLYLVEIVAKVCGKEGARTQLKVRTVAQKLAGNVRITSMQYSESFLNTSSREHREFVELFFRTVRDSLPATLRQHMDAGRIRVDIINITNGSIVVEFNLLMTADLDVREVSAGFLNALQNTSMLEVVRGKTFMQDYNECDMKEDDCAPGTCRNTFGSFTCSCDEGGPDSQVEYSGRSCDGDPSGNMTQTPGSEWSPTPAGTRGVPVPIASSTAQDLPLRLNLMDAVSVSCEIETVIITIQKRFLQQAAIPEASLYLGEPSCNVSRSNSTHVFLVAGWGECGTILQSNMTTTVVTTTLRNNLSPEGVIHHPQFLSPIHCAFQNDVLTSSGYTPQWGVYTVIEDLHGTGNFVTEMQLYIGDSPIPQNYSVSASDEIKIEVGLHRQKSSLKVVLTECWATPSSNAKDPVTFSFINNSCPVPNTYTSVIQNGHSSKAQFKLRIFSFINNSIVYLHCKLRVCMENPRNSCRISCNDFRSLRSSEALHQMTWGPLHRTEGAQACTKPVLGTGYIILLAAAALLVVAGATTLLILRYQRVRQKYNLRIQTDDFSYQVFSQ.

A signal peptide spans 1 to 22 (MMSRTVRLVLLALACTVDLSQA). The Extracellular portion of the chain corresponds to 23–1273 (SGFTENGLSL…CTKPVLGTGY (1251 aa)). One can recognise an EMI domain in the interval 34–107 (SYQLCSYPVT…FEQLGLYCVL (74 aa)). 3 disulfide bridges follow: cysteine 38–cysteine 95, cysteine 62–cysteine 71, and cysteine 94–cysteine 105. A glycan (N-linked (GlcNAc...) asparagine) is linked at asparagine 90. A glycan (N-linked (GlcNAc...) asparagine) is linked at asparagine 110. In terms of domain architecture, WAP spans 115 to 159 (FASRPGVCPTAEAEPLSPSCSLDTDCSGLQKCCSWPGGRHCVSPT). N-linked (GlcNAc...) asparagine glycosylation is found at asparagine 172, asparagine 193, and asparagine 243. The 42-residue stretch at 265 to 306 (DVNECLHSELQACSVREQCRNLEGSYQCVSSQRLNHTDEDCP) folds into the EGF-like 1; calcium-binding domain. 2 cysteine pairs are disulfide-bonded: cysteine 269-cysteine 283 and cysteine 277-cysteine 292. In terms of domain architecture, Fibronectin type-III 1 spans 307 to 391 (PIRDFVALNV…ATLVVKTDAQ (85 aa)). Asparagine 315 carries an N-linked (GlcNAc...) asparagine glycan. One can recognise an SEA 1 domain in the interval 389-503 (DAQVFQVTIR…QRTFVQDWDE (115 aa)). The EGF-like 2; calcium-binding domain maps to 500 to 545 (DWDECAHSSEHDCHPSARCINLEGSYTCQCLTARDASPSRAGRVCE). Cystine bridges form between cysteine 504–cysteine 518, cysteine 512–cysteine 527, and cysteine 529–cysteine 544. Disordered stretches follow at residues 569 to 649 (TGIT…ITKD) and 664 to 703 (HSSP…PESP). Residues 619 to 632 (TGQGQTHGTHQGTT) are compositionally biased toward low complexity. A compositionally biased stretch (basic and acidic residues) spans 638-647 (TTRESQELIT). Residues 664–678 (HSSPTWKTPPNSTRL) are compositionally biased toward polar residues. The Fibronectin type-III 2 domain occupies 709-795 (PIGKVTVSNV…QLKVRTVAQK (87 aa)). Residues asparagine 717 and asparagine 757 are each glycosylated (N-linked (GlcNAc...) asparagine). The SEA 2 domain maps to 792–904 (VAQKLAGNVR…GKTFMQDYNE (113 aa)). The EGF-like 3; calcium-binding domain occupies 901–945 (DYNECDMKEDDCAPGTCRNTFGSFTCSCDEGGPDSQVEYSGRSCD). Cystine bridges form between cysteine 905–cysteine 917, cysteine 912–cysteine 926, and cysteine 928–cysteine 944. Positions 939 to 966 (YSGRSCDGDPSGNMTQTPGSEWSPTPAG) are disordered. Residues 950 to 961 (GNMTQTPGSEWS) are compositionally biased toward polar residues. Residue asparagine 951 is glycosylated (N-linked (GlcNAc...) asparagine). In terms of domain architecture, ZP spans 995–1238 (SCEIETVIIT…NSCRISCNDF (244 aa)). The cysteines at positions 1160 and 1218 are disulfide-linked. Residues 1274–1294 (IILLAAAALLVVAGATTLLIL) traverse the membrane as a helical segment. Over 1295 to 1319 (RYQRVRQKYNLRIQTDDFSYQVFSQ) the chain is Cytoplasmic.

The protein localises to the cell membrane. This chain is Uromodulin-like 1 (Umodl1), found in Mus musculus (Mouse).